The following is a 239-amino-acid chain: Ribonuclease 3 (239 aa).

The region spanning 12-137 is the RNase III domain; sequence REKVEAVIGY…LIAAIYLDAG (126 aa). Glu50 is a binding site for Mg(2+). Residue Asp54 is part of the active site. Residues Asp123 and Glu126 each contribute to the Mg(2+) site. The active site involves Glu126. Positions 162 to 231 constitute a DRBM domain; sequence DAKTELQEWA…ATRLLEREGV (70 aa).

This sequence belongs to the ribonuclease III family. As to quaternary structure, homodimer. Mg(2+) serves as cofactor.

It localises to the cytoplasm. The enzyme catalyses Endonucleolytic cleavage to 5'-phosphomonoester.. In terms of biological role, digests double-stranded RNA. Involved in the processing of primary rRNA transcript to yield the immediate precursors to the large and small rRNAs (23S and 16S). Processes some mRNAs, and tRNAs when they are encoded in the rRNA operon. Processes pre-crRNA and tracrRNA of type II CRISPR loci if present in the organism. This is Ribonuclease 3 from Allorhizobium ampelinum (strain ATCC BAA-846 / DSM 112012 / S4) (Agrobacterium vitis (strain S4)).